The sequence spans 967 residues: Protein moonraker (967 aa).

The segment at 178–201 is disordered; the sequence is SHPGQSDLTVPNSPPTHDPGLQPH. Over residues 179 to 188 the composition is skewed to polar residues; it reads HPGQSDLTVP. Ser287 and Ser409 each carry phosphoserine. Disordered stretches follow at residues 401–431 and 490–601; these read ALERWPSTSPKGERRPLTAKDTFPQETSRPS and KAGK…SHLT. Residues 525-543 show a composition bias toward polar residues; the sequence is QSQPHSKSRVQQTTVSSRL. Pro residues predominate over residues 557–568; sequence WIPPNPTSPPAS. Residues 616-642 adopt a coiled-coil conformation; it reads AETSKRLKELEELKAKEIDSMQKQRLD. Ser700 and Ser826 each carry phosphoserine. The tract at residues 849 to 872 is disordered; that stretch reads RPCNGNSLDESVGTEEGSEKREAP. The interval 885-967 is necessary and sufficient for CEP20-binding; the sequence is GRAPLFVPPG…FTSEFLEAAT (83 aa).

As to quaternary structure, interacts with CEP63. Interacts with WDR62. Forms a complex with OFD1 and CEP20/FOR20. Interacts with PCM1.

It is found in the cytoplasm. Its subcellular location is the cytoskeleton. It localises to the microtubule organizing center. The protein resides in the centrosome. The protein localises to the centriole. It is found in the centriolar satellite. Its function is as follows. Involved in centriole duplication. Positively regulates CEP63 centrosomal localization. Required for WDR62 centrosomal localization and promotes the centrosomal localization of CDK2. May play a role in cilium assembly. The polypeptide is Protein moonraker (KIAA0753) (Homo sapiens (Human)).